A 407-amino-acid chain; its full sequence is Endo-1,4-beta-xylanase D (407 aa).

A signal peptide spans 1–19 (MTLVKSILLALAAGHVAQA). The GH10 domain maps to 20–333 (QLNTAAKAAG…KPAYYGILAG (314 aa)). The N-linked (GlcNAc...) asparagine glycan is linked to N118. E148 acts as the Proton donor in catalysis. The active-site Nucleophile is the E255. A disulfide bond links C283 and C289. Residues 337 to 364 (GSGSSSSTSSTTLITTTTPTASSSTTSA) form a disordered region. Residues 371 to 407 (SGAAHWGQCGGIGWSGPTICVSPYTCQVLNPYYSQCL) form the CBM1 domain.

It belongs to the glycosyl hydrolase 10 (cellulase F) family.

The protein localises to the secreted. It catalyses the reaction Endohydrolysis of (1-&gt;4)-beta-D-xylosidic linkages in xylans.. The protein operates within glycan degradation; xylan degradation. With respect to regulation, inhibited by wheat xylanase inhibiting protein I (XIP-I). Functionally, endo-1,4-beta-xylanase involved in the hydrolysis of xylan, a major structural heterogeneous polysaccharide found in plant biomass representing the second most abundant polysaccharide in the biosphere, after cellulose. Shows an endo-mode of action on xylan forming mainly xylobiose and short-chain xylooligosaccharides (XOS). The protein is Endo-1,4-beta-xylanase D (xynD) of Talaromyces funiculosus (Fruitlet core rot fungus).